An 882-amino-acid polypeptide reads, in one-letter code: Protein translocase subunit SecA (882 aa).

ATP-binding positions include glutamine 79, 97–101 (GEGKT), and aspartate 487.

The protein belongs to the SecA family.

The protein resides in the plastid. It localises to the chloroplast stroma. The protein localises to the chloroplast thylakoid membrane. It carries out the reaction ATP + H2O + cellular proteinSide 1 = ADP + phosphate + cellular proteinSide 2.. Functionally, has a central role in coupling the hydrolysis of ATP to the transfer of proteins across the thylakoid membrane. The polypeptide is Protein translocase subunit SecA (Gracilaria tenuistipitata var. liui (Red alga)).